An 897-amino-acid chain; its full sequence is Alpha-actinin-2 (897 aa).

The segment at 1-257 is actin-binding; it reads MNSMNQIETN…IMTYVSCFYH (257 aa). Calponin-homology (CH) domains follow at residues 41–145 and 154–260; these read KQQR…LRFA and TSAK…HAFA. 4 Spectrin repeats span residues 284–394, 404–509, 519–630, and 640–743; these read RLME…WLLN, HLAE…ALER, QLHL…SLQE, and RLRR…EVET. 2 EF-hand domains span residues 756 to 791 and 792 to 827; these read EQMN…MGYD and LGEA…ETAD. Ca(2+) is bound by residues D769, N773, D780, D805, N807, and T811.

The protein belongs to the alpha-actinin family. Homodimer; antiparallel. Post-translationally, ubiquitinated by FBXL22, leading to proteasomal degradation.

It localises to the cytoplasm. Its subcellular location is the myofibril. It is found in the sarcomere. The protein localises to the z line. Functionally, F-actin cross-linking protein which is thought to anchor actin to a variety of intracellular structures. This is a bundling protein. This is Alpha-actinin-2 (ACTN2) from Gallus gallus (Chicken).